Reading from the N-terminus, the 76-residue chain is Parvalbumin beta 3 (76 aa).

A1 is modified (N-acetylalanine). One can recognise an EF-hand domain in the interval 31–66; the sequence is KSPEEVKKFFAIIDQDHSGFIEEEELKLFLQTFSAG. D44, D46, S48, F50, E52, and E55 together coordinate Ca(2+).

It belongs to the parvalbumin family.

In muscle, parvalbumin is thought to be involved in relaxation after contraction. It binds two calcium ions. The polypeptide is Parvalbumin beta 3 (Merluccius polylepis (Southern hake)).